Reading from the N-terminus, the 949-residue chain is AP-1 complex subunit beta-1 (949 aa).

The residue at position 318 (Lys318) is an N6-acetyllysine. Residue Tyr574 is modified to 3'-nitrotyrosine. Residues 584-625 (GGRGVVHKSLPPRTASSESAESPETAPTGAPPGEQPDVIPAQ) form a disordered region. The span at 594 to 611 (PPRTASSESAESPETAPT) shows a compositional bias: low complexity.

This sequence belongs to the adaptor complexes large subunit family. Adaptor protein complex 1 (AP-1) is a heterotetramer composed of two large adaptins (gamma-type subunit AP1G1 and beta-type subunit AP1B1), a medium adaptin (mu-type subunit AP1M1 or AP1M2) and a small adaptin (sigma-type subunit AP1S1 or AP1S2 or AP1S3). Widely expressed.

The protein resides in the golgi apparatus. It is found in the cytoplasmic vesicle. Its subcellular location is the clathrin-coated vesicle membrane. In terms of biological role, subunit of clathrin-associated adaptor protein complex 1 that plays a role in protein sorting in the late-Golgi/trans-Golgi network (TGN) and/or endosomes. The AP complexes mediate both the recruitment of clathrin to membranes and the recognition of sorting signals within the cytosolic tails of transmembrane cargo molecules. The chain is AP-1 complex subunit beta-1 (AP1B1) from Homo sapiens (Human).